We begin with the raw amino-acid sequence, 545 residues long: T-complex protein 1 subunit gamma (545 aa).

At methionine 1 the chain carries N-acetylmethionine. The interval 1 to 24 (MMGHRPVLVLSQNTKRESGRKVQS) is disordered. A Phosphoserine modification is found at serine 11. Lysine 15 participates in a covalent cross-link: Glycyl lysine isopeptide (Lys-Gly) (interchain with G-Cter in SUMO2). Glycine 42 contacts ADP. Glycine 42 lines the ATP pocket. Aspartate 93 lines the Mg(2+) pocket. The ADP site is built by glycine 94, threonine 95, threonine 96, serine 97, threonine 162, and lysine 163. ATP is bound by residues glycine 94, threonine 95, and threonine 96. Phosphoserine is present on serine 170. At lysine 222 the chain carries N6-acetyllysine. Residues serine 243 and serine 244 each carry the phosphoserine modification. Phosphotyrosine is present on tyrosine 247. Glycyl lysine isopeptide (Lys-Gly) (interchain with G-Cter in SUMO2) cross-links involve residues lysine 248 and lysine 249. Serine 252 carries the phosphoserine modification. Cysteine 366 and cysteine 372 form a disulfide bridge. A Glycyl lysine isopeptide (Lys-Gly) (interchain with G-Cter in SUMO2) cross-link involves residue lysine 381. An ADP-binding site is contributed by glycine 411. Glycine 411 contributes to the ATP binding site. 2 positions are modified to phosphothreonine: threonine 430 and threonine 459. Positions 482, 483, 497, and 502 each coordinate ADP. Glycine 482 is a binding site for ATP. Glutamate 497 serves as a coordination point for ATP. The disordered stretch occupies residues 526–545 (HKKKGDDQSRQGGAPDAGQE).

Belongs to the TCP-1 chaperonin family. In terms of assembly, component of the chaperonin-containing T-complex (TRiC), a hexadecamer composed of two identical back-to-back stacked rings enclosing a protein folding chamber. Each ring is made up of eight different subunits: TCP1/CCT1, CCT2, CCT3, CCT4, CCT5, CCT6A/CCT6, CCT7, CCT8. Interacts with PACRG. Interacts with DNAAF4. Interacts with DLEC1.

The protein localises to the cytoplasm. It carries out the reaction ATP + H2O = ADP + phosphate + H(+). Its function is as follows. Component of the chaperonin-containing T-complex (TRiC), a molecular chaperone complex that assists the folding of actin, tubulin and other proteins upon ATP hydrolysis. The TRiC complex mediates the folding of WRAP53/TCAB1, thereby regulating telomere maintenance. As part of the TRiC complex may play a role in the assembly of BBSome, a complex involved in ciliogenesis regulating transports vesicles to the cilia. The protein is T-complex protein 1 subunit gamma (CCT3) of Bos taurus (Bovine).